A 261-amino-acid polypeptide reads, in one-letter code: Chanoclavine-I dehydrogenase easD (261 aa).

An N-terminal signal peptide occupies residues methionine 1–alanine 20. Isoleucine 18 is an NADP(+) binding site. Residue asparagine 43 is glycosylated (N-linked (GlcNAc...) asparagine). Residues aspartate 66, arginine 132, tyrosine 166, lysine 170, and threonine 201 each coordinate NADP(+). Catalysis depends on tyrosine 166, which acts as the Proton donor. Lysine 170 functions as the Lowers pKa of active site Tyr in the catalytic mechanism.

This sequence belongs to the short-chain dehydrogenases/reductases (SDR) family. Homotetramer.

The catalysed reaction is chanoclavine-I + NAD(+) = chanoclavine-I aldehyde + NADH + H(+). It participates in alkaloid biosynthesis; ergot alkaloid biosynthesis. Functionally, chanoclavine-I dehydrogenase; part of the gene cluster that mediates the biosynthesis of fungal ergot alkaloid. DmaW catalyzes the first step of ergot alkaloid biosynthesis by condensing dimethylallyl diphosphate (DMAP) and tryptophan to form 4-dimethylallyl-L-tryptophan. The second step is catalyzed by the methyltransferase easF that methylates 4-dimethylallyl-L-tryptophan in the presence of S-adenosyl-L-methionine, resulting in the formation of 4-dimethylallyl-L-abrine. The catalase easC and the FAD-dependent oxidoreductase easE then transform 4-dimethylallyl-L-abrine to chanoclavine-I which is further oxidized by easD in the presence of NAD(+), resulting in the formation of chanoclavine-I aldehyde. Agroclavine dehydrogenase easG then mediates the conversion of chanoclavine-I aldehyde to agroclavine via a non-enzymatic adduct reaction: the substrate is an iminium intermediate that is formed spontaneously from chanoclavine-I aldehyde in the presence of glutathione. The presence of easA is not required to complete this reaction. Further conversion of agroclavine to paspalic acid is a two-step process involving oxidation of agroclavine to elymoclavine and of elymoclavine to paspalic acid, the second step being performed by the elymoclavine oxidase cloA. Paspalic acid is then further converted to D-lysergic acid. Ergopeptines are assembled from D-lysergic acid and three different amino acids by the D-lysergyl-peptide-synthetases composed each of a monomudular and a trimodular nonribosomal peptide synthetase subunit. LpsB and lpsC encode the monomodular subunits responsible for D-lysergic acid activation and incorporation into the ergopeptine backbone. LpsA1 and A2 subunits encode the trimodular nonribosomal peptide synthetase assembling the tripeptide portion of ergopeptines. LpsA1 is responsible for formation of the major ergopeptine, ergotamine, and lpsA2 for alpha-ergocryptine, the minor ergopeptine of the total alkaloid mixture elaborated by C.purpurea. D-lysergyl-tripeptides are assembled by the nonribosomal peptide synthetases and released as N-(D-lysergyl-aminoacyl)-lactams. Cyclolization of the D-lysergyl-tripeptides is performed by the Fe(2+)/2-ketoglutarate-dependent dioxygenase easH which introduces a hydroxyl group into N-(D-lysergyl-aminoacyl)-lactam at alpha-C of the aminoacyl residue followed by spontaneous condensation with the terminal lactam carbonyl group. In Claviceps purpurea (strain 20.1) (Ergot fungus), this protein is Chanoclavine-I dehydrogenase easD.